The primary structure comprises 407 residues: Large ribosomal subunit protein uL3-like (407 aa).

The span at 1 to 31 shows a compositional bias: basic residues; it reads MSHRKFSAPRHGHLGFLPHKRSHRHRGKVKT. Disordered regions lie at residues 1–35 and 383–407; these read MSHRKFSAPRHGHLGFLPHKRSHRHRGKVKTWPRD and QEKRAFMGPQKKHLEKEKPETSGDL. The segment covering 394–407 has biased composition (basic and acidic residues); that stretch reads KHLEKEKPETSGDL.

It belongs to the universal ribosomal protein uL3 family. In terms of assembly, component of the large ribosomal subunit in striated muscle cells.

Functionally, heart- and skeletal muscle-specific component of the ribosome, which regulates muscle function. Component of the large ribosomal subunit in striated muscle cells: replaces the RPL3 paralog in the ribosome in these cells. The ribosome is a large ribonucleoprotein complex responsible for the synthesis of proteins in the cell. Inhibits myotube growth and muscle function. The chain is Large ribosomal subunit protein uL3-like (RPL3L) from Bos taurus (Bovine).